The chain runs to 324 residues: Probable pectinesterase A (324 aa).

Residues 1 to 19 form the signal peptide; the sequence is MHGSLLKLALLSFSLGSSA. Q142 serves as a coordination point for substrate. D165 acts as the Proton donor in catalysis. D186 serves as the catalytic Nucleophile. Substrate contacts are provided by R246 and W248. N285 carries N-linked (GlcNAc...) asparagine glycosylation.

The protein belongs to the pectinesterase family.

The protein localises to the secreted. It catalyses the reaction [(1-&gt;4)-alpha-D-galacturonosyl methyl ester](n) + n H2O = [(1-&gt;4)-alpha-D-galacturonosyl](n) + n methanol + n H(+). It participates in glycan metabolism; pectin degradation; 2-dehydro-3-deoxy-D-gluconate from pectin: step 1/5. Functionally, involved in maceration and soft-rotting of plant tissue. The protein is Probable pectinesterase A (pmeA) of Aspergillus oryzae (strain ATCC 42149 / RIB 40) (Yellow koji mold).